The chain runs to 307 residues: 4-hydroxy-3-methylbut-2-enyl diphosphate reductase (307 aa).

Cys13 contributes to the [4Fe-4S] cluster binding site. Positions 42 and 75 each coordinate (2E)-4-hydroxy-3-methylbut-2-enyl diphosphate. Dimethylallyl diphosphate is bound by residues His42 and His75. His42 and His75 together coordinate isopentenyl diphosphate. Cys97 lines the [4Fe-4S] cluster pocket. His125 contributes to the (2E)-4-hydroxy-3-methylbut-2-enyl diphosphate binding site. His125 provides a ligand contact to dimethylallyl diphosphate. His125 is an isopentenyl diphosphate binding site. The Proton donor role is filled by Glu127. A (2E)-4-hydroxy-3-methylbut-2-enyl diphosphate-binding site is contributed by Thr165. Cys195 serves as a coordination point for [4Fe-4S] cluster. 4 residues coordinate (2E)-4-hydroxy-3-methylbut-2-enyl diphosphate: Ser223, Ser224, Asn225, and Ser267. Dimethylallyl diphosphate-binding residues include Ser223, Ser224, Asn225, and Ser267. The isopentenyl diphosphate site is built by Ser223, Ser224, Asn225, and Ser267.

It belongs to the IspH family. [4Fe-4S] cluster is required as a cofactor.

It carries out the reaction isopentenyl diphosphate + 2 oxidized [2Fe-2S]-[ferredoxin] + H2O = (2E)-4-hydroxy-3-methylbut-2-enyl diphosphate + 2 reduced [2Fe-2S]-[ferredoxin] + 2 H(+). It catalyses the reaction dimethylallyl diphosphate + 2 oxidized [2Fe-2S]-[ferredoxin] + H2O = (2E)-4-hydroxy-3-methylbut-2-enyl diphosphate + 2 reduced [2Fe-2S]-[ferredoxin] + 2 H(+). It participates in isoprenoid biosynthesis; dimethylallyl diphosphate biosynthesis; dimethylallyl diphosphate from (2E)-4-hydroxy-3-methylbutenyl diphosphate: step 1/1. Its pathway is isoprenoid biosynthesis; isopentenyl diphosphate biosynthesis via DXP pathway; isopentenyl diphosphate from 1-deoxy-D-xylulose 5-phosphate: step 6/6. Functionally, catalyzes the conversion of 1-hydroxy-2-methyl-2-(E)-butenyl 4-diphosphate (HMBPP) into a mixture of isopentenyl diphosphate (IPP) and dimethylallyl diphosphate (DMAPP). Acts in the terminal step of the DOXP/MEP pathway for isoprenoid precursor biosynthesis. The polypeptide is 4-hydroxy-3-methylbut-2-enyl diphosphate reductase (Chlamydia trachomatis serovar D (strain ATCC VR-885 / DSM 19411 / UW-3/Cx)).